A 158-amino-acid polypeptide reads, in one-letter code: MPHTGSQHTLQATPKTAQHTGAQKAPEQAIALKKEQQLKNQEGATSHRKAHTEGCHTQKTRMSADKAGLRHRQGSGEVRARTASTRVEGECSSDGVVMMFCMPARGEEEKASGEARGEDVGSSRESRQGTAHKSTCMHTEAASLQKAGEIGKVEDAKT.

Polar residues predominate over residues 1 to 21; that stretch reads MPHTGSQHTLQATPKTAQHTG. 2 disordered regions span residues 1–89 and 107–158; these read MPHT…RVEG and EEEK…DAKT. Composition is skewed to basic and acidic residues over residues 51 to 68 and 107 to 127; these read HTEG…DKAG and EEEK…RESR. The span at 128 to 137 shows a compositional bias: polar residues; that stretch reads QGTAHKSTCM. The span at 149–158 shows a compositional bias: basic and acidic residues; that stretch reads EIGKVEDAKT.

This is an uncharacterized protein from Encephalitozoon cuniculi (strain GB-M1) (Microsporidian parasite).